The primary structure comprises 456 residues: PTS system sucrose-specific EIIBC component (456 aa).

The PTS EIIB type-1 domain maps to 4-87 (EQISCSLLPL…TQAAGISESS (84 aa)). The Phosphocysteine intermediate; for EIIB activity role is filled by Cys-26. One can recognise a PTS EIIC type-1 domain in the interval 107-456 (RLLSNIFVPI…LVLKYKTDAE (350 aa)). Helical transmembrane passes span 112–132 (IFVP…LLGM), 144–164 (AIYI…PILI), 181–201 (TLGG…AAGF), 213–233 (MIGY…MSIV), 247–267 (LILT…LIIG), 288–308 (AGWL…ITGI), 329–349 (FLLP…LAVW), 360–380 (ITLP…IFGI), 388–408 (FIAA…VHVY), and 428–448 (LLNY…VSLV).

The protein localises to the cell inner membrane. The enzyme catalyses N(pros)-phospho-L-histidyl-[protein](out) + sucrose = sucrose 6(G)-phosphate(in) + L-histidyl-[protein]. The phosphoenolpyruvate-dependent sugar phosphotransferase system (sugar PTS), a major carbohydrate active transport system, catalyzes the phosphorylation of incoming sugar substrates concomitantly with their translocation across the cell membrane. This system is involved in sucrose transport. In Salmonella typhimurium, this protein is PTS system sucrose-specific EIIBC component.